Here is a 343-residue protein sequence, read N- to C-terminus: Heat-inducible transcription repressor HrcA (343 aa).

The protein belongs to the HrcA family.

In terms of biological role, negative regulator of class I heat shock genes (grpE-dnaK-dnaJ and groELS operons). Prevents heat-shock induction of these operons. The polypeptide is Heat-inducible transcription repressor HrcA (Mycolicibacterium smegmatis (strain ATCC 700084 / mc(2)155) (Mycobacterium smegmatis)).